Here is a 168-residue protein sequence, read N- to C-terminus: Ribosome maturation factor RimM (168 aa).

One can recognise a PRC barrel domain in the interval 96–168; it reads KDEYYWGDLV…RIRVAWQKDW (73 aa).

It belongs to the RimM family. Binds ribosomal protein uS19.

The protein resides in the cytoplasm. In terms of biological role, an accessory protein needed during the final step in the assembly of 30S ribosomal subunit, possibly for assembly of the head region. Essential for efficient processing of 16S rRNA. May be needed both before and after RbfA during the maturation of 16S rRNA. It has affinity for free ribosomal 30S subunits but not for 70S ribosomes. The polypeptide is Ribosome maturation factor RimM (Azoarcus sp. (strain BH72)).